A 224-amino-acid polypeptide reads, in one-letter code: Deoxyribose-phosphate aldolase (224 aa).

Residue aspartate 92 is the Proton donor/acceptor of the active site. The Schiff-base intermediate with acetaldehyde role is filled by lysine 155. Lysine 184 serves as the catalytic Proton donor/acceptor.

It belongs to the DeoC/FbaB aldolase family. DeoC type 1 subfamily.

It localises to the cytoplasm. It catalyses the reaction 2-deoxy-D-ribose 5-phosphate = D-glyceraldehyde 3-phosphate + acetaldehyde. It functions in the pathway carbohydrate degradation; 2-deoxy-D-ribose 1-phosphate degradation; D-glyceraldehyde 3-phosphate and acetaldehyde from 2-deoxy-alpha-D-ribose 1-phosphate: step 2/2. Its function is as follows. Catalyzes a reversible aldol reaction between acetaldehyde and D-glyceraldehyde 3-phosphate to generate 2-deoxy-D-ribose 5-phosphate. The sequence is that of Deoxyribose-phosphate aldolase from Shouchella clausii (strain KSM-K16) (Alkalihalobacillus clausii).